Here is a 444-residue protein sequence, read N- to C-terminus: Phosphoglucosamine mutase (444 aa).

The active-site Phosphoserine intermediate is the serine 104. Residues serine 104, aspartate 243, aspartate 245, and aspartate 247 each coordinate Mg(2+). The residue at position 104 (serine 104) is a Phosphoserine.

Belongs to the phosphohexose mutase family. Mg(2+) is required as a cofactor. Activated by phosphorylation.

The enzyme catalyses alpha-D-glucosamine 1-phosphate = D-glucosamine 6-phosphate. In terms of biological role, catalyzes the conversion of glucosamine-6-phosphate to glucosamine-1-phosphate. This is Phosphoglucosamine mutase from Neisseria gonorrhoeae (strain ATCC 700825 / FA 1090).